The primary structure comprises 29 residues: Small ribosomal subunit protein uS7 (29 aa).

Residues Glu-1–Arg-29 form a disordered region. Positions Arg-8–Arg-29 are enriched in basic and acidic residues.

It belongs to the universal ribosomal protein uS7 family. As to quaternary structure, part of the 30S ribosomal subunit.

One of the primary rRNA binding proteins, it binds directly to 16S rRNA where it nucleates assembly of the head domain of the 30S subunit. Is located at the subunit interface close to the decoding center. This chain is Small ribosomal subunit protein uS7 (rps7), found in Methanosarcina thermophila.